A 296-amino-acid polypeptide reads, in one-letter code: Phosphoribosylaminoimidazole-succinocarboxamide synthase (296 aa).

The protein belongs to the SAICAR synthetase family.

It carries out the reaction 5-amino-1-(5-phospho-D-ribosyl)imidazole-4-carboxylate + L-aspartate + ATP = (2S)-2-[5-amino-1-(5-phospho-beta-D-ribosyl)imidazole-4-carboxamido]succinate + ADP + phosphate + 2 H(+). It functions in the pathway purine metabolism; IMP biosynthesis via de novo pathway; 5-amino-1-(5-phospho-D-ribosyl)imidazole-4-carboxamide from 5-amino-1-(5-phospho-D-ribosyl)imidazole-4-carboxylate: step 1/2. This Desulfotalea psychrophila (strain LSv54 / DSM 12343) protein is Phosphoribosylaminoimidazole-succinocarboxamide synthase.